The sequence spans 64 residues: Small ribosomal subunit protein eS17 (64 aa).

This sequence belongs to the eukaryotic ribosomal protein eS17 family.

The protein is Small ribosomal subunit protein eS17 of Methanocorpusculum labreanum (strain ATCC 43576 / DSM 4855 / Z).